The following is a 547-amino-acid chain: Riboflavin transporter RibJ (547 aa).

Topologically, residues 1–11 (MLPSFTRKPAD) are cytoplasmic. Residues 12 to 32 (HPIGYLVALSGLLMQLMSYGI) form a helical membrane-spanning segment. The Extracellular portion of the chain corresponds to 33 to 58 (DNSYSIFSEDMHNDPSLGFPSITAIS). A helical transmembrane segment spans residues 59–79 (LGNSVSLGLSPAFGVLAGFCV). Over 80–85 (DRLPPR) the chain is Cytoplasmic. Residues 86–106 (FMMALSTILLFTGLWISSTLA) form a helical membrane-spanning segment. Residues 107 to 108 (AN) lie on the Extracellular side of the membrane. A helical transmembrane segment spans residues 109 to 129 (IYVVTFTYCLFASIGTACMLS). Residues 130–144 (PGAAATSSWFNRYQG) are Cytoplasmic-facing. Residues 145-165 (LAMGINFAGGGIGSAIIPPLA) traverse the membrane as a helical segment. Over 166–175 (GKWVVAYGWR) the chain is Extracellular. Residues 176–196 (KAFQLMSIFCAIGVLATALSA) traverse the membrane as a helical segment. Over 197–344 (RRREPKRDDS…MFTLPFMGNF (148 aa)) the chain is Cytoplasmic. The segment at 198–293 (RREPKRDDSS…EGLDVTEQSQ (96 aa)) is disordered. Over residues 244–255 (NEGKEDVREMGR) the composition is skewed to basic and acidic residues. Residues 345–365 (LCWFIYSWAFYSLIYAAVPYI) form a helical membrane-spanning segment. Residues 366–386 (SSMGKPGTVYAGVPPIPTDVA) lie on the Extracellular side of the membrane. Residues 387–407 (ATLFTFYGVFQVVGSVLVGWL) traverse the membrane as a helical segment. Residues 408-412 (ASLVT) lie on the Cytoplasmic side of the membrane. A helical membrane pass occupies residues 413 to 433 (AEFAYVFCATVGGIGCGLLAL). The Extracellular segment spans residues 434-437 (GRSY). The chain crosses the membrane as a helical span at residues 438 to 458 (VAFALLLCIIGFCMAGMFAVM). Residues 459–470 (PTLIATHLYGPN) are Cytoplasmic-facing. A helical membrane pass occupies residues 471-491 (LGFYFGAVFLAGVVGGFVAPP). At 492–505 (MQATIQLRNNGSYA) the chain is on the extracellular side. An N-linked (GlcNAc...) asparagine glycan is attached at Asn-501. The chain crosses the membrane as a helical span at residues 506 to 526 (FVCVVMSVSMTLSALVCYATL). Residues 527 to 547 (WRSKRSGIVLAARKTKLVEIM) lie on the Cytoplasmic side of the membrane.

This sequence belongs to the major facilitator superfamily. RibJ family.

It is found in the cell membrane. Transporter involved in riboflavin (vitamin B2) uptake. Also transports FMN and FAD. This Trypanosoma brucei brucei (strain 927/4 GUTat10.1) protein is Riboflavin transporter RibJ.